The primary structure comprises 1231 residues: Pesticidal crystal protein Cry1Bd (1231 aa).

Belongs to the delta endotoxin family.

Functionally, promotes colloidosmotic lysis by binding to the midgut epithelial cells of lepidopteran larvae. Toxic to Plutella xylostella. This Bacillus thuringiensis subsp. wuhanensis protein is Pesticidal crystal protein Cry1Bd (cry1Bd).